Here is a 335-residue protein sequence, read N- to C-terminus: Biotin synthase (335 aa).

Residues 51–281 (YRVQLASLLS…RSRVRLSAGR (231 aa)) form the Radical SAM core domain. 3 residues coordinate [4Fe-4S] cluster: Cys66, Cys70, and Cys73. Residues Cys112, Cys144, Cys204, and Arg276 each coordinate [2Fe-2S] cluster.

It belongs to the radical SAM superfamily. Biotin synthase family. In terms of assembly, homodimer. [4Fe-4S] cluster is required as a cofactor. [2Fe-2S] cluster serves as cofactor.

It carries out the reaction (4R,5S)-dethiobiotin + (sulfur carrier)-SH + 2 reduced [2Fe-2S]-[ferredoxin] + 2 S-adenosyl-L-methionine = (sulfur carrier)-H + biotin + 2 5'-deoxyadenosine + 2 L-methionine + 2 oxidized [2Fe-2S]-[ferredoxin]. It functions in the pathway cofactor biosynthesis; biotin biosynthesis; biotin from 7,8-diaminononanoate: step 2/2. In terms of biological role, catalyzes the conversion of dethiobiotin (DTB) to biotin by the insertion of a sulfur atom into dethiobiotin via a radical-based mechanism. In Prochlorococcus marinus (strain MIT 9303), this protein is Biotin synthase.